The chain runs to 206 residues: Uracil phosphoribosyltransferase (206 aa).

5-phospho-alpha-D-ribose 1-diphosphate is bound by residues Arg-76, Arg-101, and 128–136; that span reads DPMLATGGS. Residues Ile-191 and 196–198 each bind uracil; that span reads GDA. 5-phospho-alpha-D-ribose 1-diphosphate is bound at residue Asp-197.

The protein belongs to the UPRTase family. The cofactor is Mg(2+).

The enzyme catalyses UMP + diphosphate = 5-phospho-alpha-D-ribose 1-diphosphate + uracil. It participates in pyrimidine metabolism; UMP biosynthesis via salvage pathway; UMP from uracil: step 1/1. With respect to regulation, allosterically activated by GTP. Functionally, catalyzes the conversion of uracil and 5-phospho-alpha-D-ribose 1-diphosphate (PRPP) to UMP and diphosphate. This Malacoplasma penetrans (strain HF-2) (Mycoplasma penetrans) protein is Uracil phosphoribosyltransferase.